The chain runs to 296 residues: Fructose-bisphosphate aldolase class 1 (296 aa).

Glu-175 (proton acceptor) is an active-site residue. Lys-212 functions as the Schiff-base intermediate with dihydroxyacetone-P in the catalytic mechanism.

Belongs to the class I fructose-bisphosphate aldolase family.

It carries out the reaction beta-D-fructose 1,6-bisphosphate = D-glyceraldehyde 3-phosphate + dihydroxyacetone phosphate. It functions in the pathway carbohydrate degradation; glycolysis; D-glyceraldehyde 3-phosphate and glycerone phosphate from D-glucose: step 4/4. This is Fructose-bisphosphate aldolase class 1 from Staphylococcus aureus (strain MSSA476).